Here is a 121-residue protein sequence, read N- to C-terminus: Basic phospholipase A2 homolog GodMT-II (121 aa).

7 disulfides stabilise this stretch: C26–C115, C28–C44, C43–C95, C49–C121, C50–C88, C57–C81, and C75–C86. Residues 105 to 117 are important for membrane-damaging activities in eukaryotes and bacteria; heparin-binding; that stretch reads KNYKIYPKPLCKK.

It belongs to the phospholipase A2 family. Group II subfamily. K49 sub-subfamily. Monomer. Expressed by the venom gland.

The protein localises to the secreted. Snake venom phospholipase A2 homolog that lacks enzymatic activity but shows high myotoxic activities. In vivo, induces a mild edema when subcutaneously injected into mice foot pad. The protein is Basic phospholipase A2 homolog GodMT-II of Cerrophidion godmani (Porthidium godmani).